We begin with the raw amino-acid sequence, 25 residues long: Snake venom metalloproteinase catroxase (25 aa).

Glu9 is a Ca(2+) binding site.

The protein belongs to the venom metalloproteinase (M12B) family. As to quaternary structure, monomer. It depends on Zn(2+) as a cofactor. Expressed by the venom gland.

The protein resides in the secreted. Inhibited by EDTA, beta-mercaptoethanol, but not by PMSF, p-tosyl-L-phenylalanine chloromethyl ketone, p-tosyl-L-lysine chloromethyl ketone, soybean trypsin inhibitor and aprotinin. Metalloprotease that is highly active against alpha-(FGA) and beta-chains (FGB) of fibrinogen molecules. The chain is Snake venom metalloproteinase catroxase from Crotalus atrox (Western diamondback rattlesnake).